A 206-amino-acid chain; its full sequence is Macrophage immunometabolism regulator (206 aa).

This sequence belongs to the UNC119-binding protein family. Interacts with unc119 family proteins; interaction preferentially takes place when unc119 proteins are unliganded with myristoylated proteins.

It is found in the cytoplasm. The protein localises to the cell projection. Its subcellular location is the cilium. May play a role in immune regulation through regulation of the macrophage function. Involved in the recruitment of macrophages in response to injury. May also play a role in trafficking of proteins via its interaction with unc119 family cargo adapters. May play a role in ciliary membrane localization. Functionally, regulates the macrophage function, by enhancing the resolution of inflammation and wound repair functions mediated by M2 macrophages. The regulation of macrophage function is, due at least in part, to the role of C5orf30 in regulating ability to inhibit glycolysis. Probably plays alaso a role in trafficking of proteins via its interaction with UNC119 and UNC119B cargo adapters: may help the release of UNC119 and UNC119B cargo or the recycling of UNC119 and UNC119B. May play a role in ciliary membrane localization via its interaction with UNC119B and protein transport into photoreceptor cells. The chain is Macrophage immunometabolism regulator (macir) from Danio rerio (Zebrafish).